We begin with the raw amino-acid sequence, 68 residues long: TxMMSK-03 (68 aa).

Positions 1–19 are cleaved as a signal peptide; it reads MSKLGALLIICLLLFPLTA. Residues 20–50 constitute a propeptide that is removed on maturation; it reads VPMDGDQPADRPAERMQDDISFEQHPMFDAT. 3 disulfide bridges follow: cysteine 53-cysteine 67, cysteine 54-cysteine 63, and cysteine 59-cysteine 66. Proline 65 carries the 4-hydroxyproline; partial modification.

Contains 3 disulfide bonds. Expressed by the venom duct. Both hydroxylated and non-hydroxylated forms are mostly and only present in part 2 (proximal of the venom bulb) of the venom duct, respectively.

It is found in the secreted. The protein is TxMMSK-03 of Conus textile (Cloth-of-gold cone).